The following is a 539-amino-acid chain: Glutathione synthetase, chloroplastic (539 aa).

The N-terminal 61 residues, 1-61 (MGSGCSSLSY…SPLRCGRSFK (61 aa)), are a transit peptide targeting the chloroplast. Arg-193 is a substrate binding site. Glu-209 contributes to the ATP binding site. Mg(2+) contacts are provided by Glu-209 and Asn-211. Substrate-binding positions include 213-216 (ISCS), 281-283 (ERN), Gln-287, and 335-338 (RSGY). ATP contacts are provided by residues Lys-374, 428-437 (KPQREGGGNN), Tyr-439, 464-467 (MQRI), and Glu-490. Glu-432 lines the Mg(2+) pocket. Arg-515 is a substrate binding site. ATP contacts are provided by Lys-517 and Glu-523. 526–527 (VA) contacts substrate.

Belongs to the eukaryotic GSH synthase family. In terms of assembly, homodimer. Mg(2+) serves as cofactor.

It localises to the plastid. It is found in the chloroplast. The enzyme catalyses gamma-L-glutamyl-L-cysteine + glycine + ATP = glutathione + ADP + phosphate + H(+). Its pathway is sulfur metabolism; glutathione biosynthesis; glutathione from L-cysteine and L-glutamate: step 2/2. The protein is Glutathione synthetase, chloroplastic (GSH2) of Arabidopsis thaliana (Mouse-ear cress).